Here is a 239-residue protein sequence, read N- to C-terminus: Probable replication-associated protein repA2 (239 aa).

This sequence belongs to the IncFII RepA family.

In terms of biological role, this protein is essential for plasmid replication; it is involved in copy control functions. This is Probable replication-associated protein repA2 (repA2) from Buchnera aphidicola subsp. Baizongia pistaciae (strain Bp).